Consider the following 236-residue polypeptide: Peptidase E (236 aa).

Catalysis depends on charge relay system residues S122, D137, and H159.

The protein belongs to the peptidase S51 family.

It localises to the cytoplasm. It catalyses the reaction Dipeptidase E catalyzes the hydrolysis of dipeptides Asp-|-Xaa. It does not act on peptides with N-terminal Glu, Asn or Gln, nor does it cleave isoaspartyl peptides.. In terms of biological role, hydrolyzes dipeptides containing N-terminal aspartate residues. May play a role in allowing the cell to use peptide aspartate to spare carbon otherwise required for the synthesis of the aspartate family of amino acids. The sequence is that of Peptidase E from Shewanella oneidensis (strain ATCC 700550 / JCM 31522 / CIP 106686 / LMG 19005 / NCIMB 14063 / MR-1).